Consider the following 252-residue polypeptide: Imidazole glycerol phosphate synthase subunit HisF (252 aa).

Active-site residues include aspartate 11 and aspartate 130.

The protein belongs to the HisA/HisF family. Heterodimer of HisH and HisF.

It localises to the cytoplasm. It carries out the reaction 5-[(5-phospho-1-deoxy-D-ribulos-1-ylimino)methylamino]-1-(5-phospho-beta-D-ribosyl)imidazole-4-carboxamide + L-glutamine = D-erythro-1-(imidazol-4-yl)glycerol 3-phosphate + 5-amino-1-(5-phospho-beta-D-ribosyl)imidazole-4-carboxamide + L-glutamate + H(+). The protein operates within amino-acid biosynthesis; L-histidine biosynthesis; L-histidine from 5-phospho-alpha-D-ribose 1-diphosphate: step 5/9. Functionally, IGPS catalyzes the conversion of PRFAR and glutamine to IGP, AICAR and glutamate. The HisF subunit catalyzes the cyclization activity that produces IGP and AICAR from PRFAR using the ammonia provided by the HisH subunit. The polypeptide is Imidazole glycerol phosphate synthase subunit HisF (Bacillus mycoides (strain KBAB4) (Bacillus weihenstephanensis)).